The primary structure comprises 421 residues: Membrane-associated protein UidC (421 aa).

An N-terminal signal peptide occupies residues 1–23 (MRKIVAMAVICLTAASGLTSAYA).

The protein belongs to the outer membrane porin (Opr) (TC 1.B.25) family.

It localises to the cell outer membrane. Functionally, enhances the activity of the UidB (GusB) glucuronide transporter, on its own however it has no transport activity. Glucuronide transport does not occur in strain K12 due to a variant at position 100 of the UidB (GusB, AC P0CE44, AC P0CE45) protein. The protein is Membrane-associated protein UidC (uidC) of Escherichia coli (strain K12).